Reading from the N-terminus, the 416-residue chain is UDP-N-acetylglucosamine 1-carboxyvinyltransferase (416 aa).

22 to 23 lines the phosphoenolpyruvate pocket; sequence KN. A UDP-N-acetyl-alpha-D-glucosamine-binding site is contributed by R92. The active-site Proton donor is the C116. C116 carries the 2-(S-cysteinyl)pyruvic acid O-phosphothioketal modification. Residues 121 to 125, D304, and I326 each bind UDP-N-acetyl-alpha-D-glucosamine; that span reads RPVDQ.

The protein belongs to the EPSP synthase family. MurA subfamily.

It is found in the cytoplasm. The enzyme catalyses phosphoenolpyruvate + UDP-N-acetyl-alpha-D-glucosamine = UDP-N-acetyl-3-O-(1-carboxyvinyl)-alpha-D-glucosamine + phosphate. It functions in the pathway cell wall biogenesis; peptidoglycan biosynthesis. Functionally, cell wall formation. Adds enolpyruvyl to UDP-N-acetylglucosamine. In Cupriavidus necator (strain ATCC 17699 / DSM 428 / KCTC 22496 / NCIMB 10442 / H16 / Stanier 337) (Ralstonia eutropha), this protein is UDP-N-acetylglucosamine 1-carboxyvinyltransferase.